Consider the following 233-residue polypeptide: MDIKLKDFEGPLDLLLHLVSQYKVDIYEVPIVEVIEQYLNYIETLQVMKLEVAGDYMLMASQLMLIKSRRLLPKVVEHIEEDLEQDLLEKIEEYSRFKAVSQALAKQHDQRAKWYSKPKQELIFEDAILQEDKTVMDLFLAFSNIMAAKRAVLKNNHTVIERDDYKIEDMMASIKQRLEKENVIRLSAIFEECQTLNEVISIFLASLELIKLHVVFVEQLSNFGAIILRKEKK.

Belongs to the ScpA family. Component of a cohesin-like complex composed of ScpA, ScpB and the Smc homodimer, in which ScpA and ScpB bind to the head domain of Smc. The presence of the three proteins is required for the association of the complex with DNA.

The protein localises to the cytoplasm. Its function is as follows. Participates in chromosomal partition during cell division. May act via the formation of a condensin-like complex containing Smc and ScpB that pull DNA away from mid-cell into both cell halves. This Streptococcus pyogenes serotype M1 protein is Segregation and condensation protein A.